A 172-amino-acid polypeptide reads, in one-letter code: Counting factor-associated protein B (172 aa).

A signal peptide spans 1 to 21 (MKLLNSLILLVLTCLVSSINT). Residues asparagine 37 and asparagine 153 are each glycosylated (N-linked (GlcNAc...) asparagine).

The protein localises to the secreted. The sequence is that of Counting factor-associated protein B (cfaB) from Dictyostelium discoideum (Social amoeba).